A 248-amino-acid chain; its full sequence is Coenzyme F420:L-glutamate ligase (248 aa).

Residues 15–18 (IPLI), 45–46 (ET), and Lys-50 contribute to the GTP site. A divalent metal cation is bound at residue Asp-115. Asn-118 contributes to the GTP binding site. 3 residues coordinate a divalent metal cation: Asp-155, Ser-156, and Gln-213. A GTP-binding site is contributed by 211-218 (MGQSNEGI).

It belongs to the CofE family. Homodimer. It depends on Mg(2+) as a cofactor. Requires Mn(2+) as cofactor. K(+) is required as a cofactor.

It catalyses the reaction oxidized coenzyme F420-0 + GTP + L-glutamate = oxidized coenzyme F420-1 + GDP + phosphate + H(+). The enzyme catalyses oxidized coenzyme F420-1 + GTP + L-glutamate = oxidized coenzyme F420-2 + GDP + phosphate + H(+). It functions in the pathway cofactor biosynthesis; coenzyme F420 biosynthesis. Its function is as follows. Catalyzes the GTP-dependent successive addition of two or more gamma-linked L-glutamates to the L-lactyl phosphodiester of 7,8-didemethyl-8-hydroxy-5-deazariboflavin (F420-0) to form coenzyme F420-0-glutamyl-glutamate (F420-2) or polyglutamated F420 derivatives. This Methanococcus maripaludis (strain C7 / ATCC BAA-1331) protein is Coenzyme F420:L-glutamate ligase.